The following is a 521-amino-acid chain: Forkhead box protein N4 (521 aa).

The segment at residues 197 to 293 is a DNA-binding region (fork-head); the sequence is KPIYSYSCLI…EEMHKWKRKD (97 aa). The tract at residues 371–406 is disordered; sequence PQAHLAPDSPAPAQTPPLHALPSLSPGPLPQPAMGR.

Mainly expressed in proliferator progenitor cells in brain and retina rather than differentiated cells. In contrast, is expressed only in postmitotic epithelial cells rather than in proliferative progenitors in the proximal airway.

It is found in the nucleus. Its function is as follows. Transcription factor essential for neural and some non-neural tissues development, such as retina and lung respectively. Binds to an 11-bp consensus sequence containing the invariant tetranucleotide 5'-ACGC-3'. During development of the central nervous system, is required to specify the amacrine and horizontal cell fates from multipotent retinal progenitors while suppressing the alternative photoreceptor cell fates through activating DLL4-NOTCH signaling. Also acts synergistically with ASCL1/MASH1 to activate DLL4-NOTCH signaling and drive commitment of p2 progenitors to the V2b interneuron fates during spinal cord neurogenesis. In development of non-neural tissues, plays an essential role in the specification of the atrioventricular canal and is indirectly required for patterning the distal airway during lung development. In Mus musculus (Mouse), this protein is Forkhead box protein N4 (Foxn4).